We begin with the raw amino-acid sequence, 202 residues long: Ribonuclease HII (202 aa).

The 185-residue stretch at 18 to 202 folds into the RNase H type-2 domain; it reads GQYAGVDEVG…KSFRPVREAM (185 aa). Residues Asp-24, Glu-25, and Asp-116 each coordinate a divalent metal cation.

Belongs to the RNase HII family. Mn(2+) is required as a cofactor. It depends on Mg(2+) as a cofactor.

The protein resides in the cytoplasm. The catalysed reaction is Endonucleolytic cleavage to 5'-phosphomonoester.. Functionally, endonuclease that specifically degrades the RNA of RNA-DNA hybrids. In Shewanella piezotolerans (strain WP3 / JCM 13877), this protein is Ribonuclease HII.